Here is a 180-residue protein sequence, read N- to C-terminus: ADP-ribosylation factor 5 (180 aa).

The N-myristoyl glycine moiety is linked to residue Gly-2. GTP-binding positions include 24–31 (GLDAAGKT), 67–71 (DVGGQ), and 126–129 (NKQD).

It belongs to the small GTPase superfamily. Arf family.

The protein localises to the golgi apparatus. Its function is as follows. GTP-binding protein involved in protein trafficking; may modulate vesicle budding and uncoating within the Golgi apparatus. The chain is ADP-ribosylation factor 5 (ARF5) from Gallus gallus (Chicken).